We begin with the raw amino-acid sequence, 122 residues long: Large ribosomal subunit protein uL14 (122 aa).

Belongs to the universal ribosomal protein uL14 family. In terms of assembly, part of the 50S ribosomal subunit. Forms a cluster with proteins L3 and L19. In the 70S ribosome, L14 and L19 interact and together make contacts with the 16S rRNA in bridges B5 and B8.

In terms of biological role, binds to 23S rRNA. Forms part of two intersubunit bridges in the 70S ribosome. The polypeptide is Large ribosomal subunit protein uL14 (Halalkalibacterium halodurans (strain ATCC BAA-125 / DSM 18197 / FERM 7344 / JCM 9153 / C-125) (Bacillus halodurans)).